The chain runs to 439 residues: Tol-Pal system protein TolB (439 aa).

Positions 1–22 (MTKFPRWLAMLVGLLFPLSALT) are cleaved as a signal peptide.

The protein belongs to the TolB family. As to quaternary structure, the Tol-Pal system is composed of five core proteins: the inner membrane proteins TolA, TolQ and TolR, the periplasmic protein TolB and the outer membrane protein Pal. They form a network linking the inner and outer membranes and the peptidoglycan layer.

It is found in the periplasm. Its function is as follows. Part of the Tol-Pal system, which plays a role in outer membrane invagination during cell division and is important for maintaining outer membrane integrity. This Xylella fastidiosa (strain Temecula1 / ATCC 700964) protein is Tol-Pal system protein TolB.